Here is a 195-residue protein sequence, read N- to C-terminus: Neurturin (195 aa).

The N-terminal stretch at 1 to 19 (MRRWKAAALVSLICSSLLS) is a signal peptide. Positions 20 to 95 (VWMCQEGLLL…RAGPRRRRAR (76 aa)) are excised as a propeptide. 3 disulfides stabilise this stretch: C101-C163, C128-C192, and C132-C194. 3 residues coordinate heparan sulfate group: R147, R156, and R158.

It belongs to the TGF-beta family. GDNF subfamily. As to quaternary structure, homodimer; disulfide-linked. Interacts with GFRA2 coreceptor and RET: forms a 2:2:2 ternary complex composed of NRTN ligand, GFRA2 and RET receptor. Also forms a 4:4:4 tetrameric complex composed of 4 copies of NRTN ligand, GFRA2 and RET receptor, which prevents endocytosis of RET. As to expression, widespread distribution.

It localises to the secreted. Growth factor that supports the survival of sympathetic neurons in culture. May regulate the development and maintenance of the CNS. Involved in the development of the neural crest. Might control the size of non-neuronal cell population such as haemopoietic cells. Acts by binding to its coreceptor, GFRA2, leading to autophosphorylation and activation of the RET receptor. Heparan sulfate-binding is required for signaling. This Mus musculus (Mouse) protein is Neurturin (Nrtn).